Consider the following 573-residue polypeptide: Solute carrier family 41 member 2 (573 aa).

Topologically, residues Met-1–Gln-162 are extracellular. 2 positions are modified to phosphoserine: Ser-136 and Ser-137. Residues Ile-163–Ile-183 traverse the membrane as a helical segment. Residues Val-184–Glu-195 are Cytoplasmic-facing. Residues Val-196–Ser-216 traverse the membrane as a helical segment. Over Arg-217–Gln-245 the chain is Extracellular. The chain crosses the membrane as a helical span at residues Val-246–Pro-266. Residues Glu-267 to Ser-282 are Cytoplasmic-facing. A helical membrane pass occupies residues Val-283–Gly-303. The Extracellular segment spans residues Ser-304–Asn-313. Residues Val-314–Ile-334 form a helical membrane-spanning segment. The Cytoplasmic segment spans residues Ser-335–Tyr-347. The chain crosses the membrane as a helical span at residues Ile-348–Ala-368. Topologically, residues Lys-369–Val-376 are extracellular. The chain crosses the membrane as a helical span at residues Leu-377 to Ile-397. Topologically, residues Leu-398–Asn-406 are cytoplasmic. Residues Leu-407–Ile-427 form a helical membrane-spanning segment. Residues Gln-428–Ala-469 lie on the Extracellular side of the membrane. Residues Gln-470–Met-490 traverse the membrane as a helical segment. The Cytoplasmic segment spans residues Lys-491–Thr-498. The chain crosses the membrane as a helical span at residues Ile-499–Ile-519. Residues Ala-520 to Thr-543 are Extracellular-facing. A helical membrane pass occupies residues Ala-544 to Ile-564. Residues Gly-565–Asp-573 are Cytoplasmic-facing.

This sequence belongs to the SLC41A transporter family.

It is found in the cell membrane. The catalysed reaction is Mg(2+)(in) = Mg(2+)(out). It carries out the reaction Mn(2+)(in) = Mn(2+)(out). The enzyme catalyses Co(2+)(in) = Co(2+)(out). It catalyses the reaction Ni(2+)(in) = Ni(2+)(out). The catalysed reaction is Fe(2+)(in) = Fe(2+)(out). Its function is as follows. Acts as a plasma-membrane magnesium transporter. Can also mediate the transport of other divalent metal cations in an order of Ba(2+) &gt; Ni(2+) &gt; Co(2+) &gt; Fe(2+) &gt; Mn(2+). The sequence is that of Solute carrier family 41 member 2 (SLC41A2) from Macaca fascicularis (Crab-eating macaque).